Consider the following 436-residue polypeptide: 3-ketoacyl-CoA thiolase (436 aa).

Catalysis depends on Cys99, which acts as the Acyl-thioester intermediate. Active-site proton acceptor residues include His392 and Cys422.

It belongs to the thiolase-like superfamily. Thiolase family. As to quaternary structure, heterotetramer of two alpha chains (FadJ) and two beta chains (FadI).

It is found in the cytoplasm. It catalyses the reaction an acyl-CoA + acetyl-CoA = a 3-oxoacyl-CoA + CoA. It participates in lipid metabolism; fatty acid beta-oxidation. In terms of biological role, catalyzes the final step of fatty acid oxidation in which acetyl-CoA is released and the CoA ester of a fatty acid two carbons shorter is formed. This chain is 3-ketoacyl-CoA thiolase, found in Salmonella paratyphi C (strain RKS4594).